Reading from the N-terminus, the 270-residue chain is Putative pyruvate, phosphate dikinase regulatory protein (270 aa).

An ADP-binding site is contributed by 148–155 (GISRTSKT).

The protein belongs to the pyruvate, phosphate/water dikinase regulatory protein family. PDRP subfamily.

It carries out the reaction N(tele)-phospho-L-histidyl/L-threonyl-[pyruvate, phosphate dikinase] + ADP = N(tele)-phospho-L-histidyl/O-phospho-L-threonyl-[pyruvate, phosphate dikinase] + AMP + H(+). It catalyses the reaction N(tele)-phospho-L-histidyl/O-phospho-L-threonyl-[pyruvate, phosphate dikinase] + phosphate + H(+) = N(tele)-phospho-L-histidyl/L-threonyl-[pyruvate, phosphate dikinase] + diphosphate. Its function is as follows. Bifunctional serine/threonine kinase and phosphorylase involved in the regulation of the pyruvate, phosphate dikinase (PPDK) by catalyzing its phosphorylation/dephosphorylation. This chain is Putative pyruvate, phosphate dikinase regulatory protein, found in Bacillus cereus (strain 03BB102).